Consider the following 189-residue polypeptide: Pyridoxal 5'-phosphate synthase subunit PdxT (189 aa).

An L-glutamine-binding site is contributed by 46–48 (GES). Catalysis depends on Cys-78, which acts as the Nucleophile. L-glutamine-binding positions include Arg-107 and 136–137 (IR). Catalysis depends on charge relay system residues His-173 and Glu-175.

The protein belongs to the glutaminase PdxT/SNO family. As to quaternary structure, in the presence of PdxS, forms a dodecamer of heterodimers. Only shows activity in the heterodimer.

The enzyme catalyses aldehydo-D-ribose 5-phosphate + D-glyceraldehyde 3-phosphate + L-glutamine = pyridoxal 5'-phosphate + L-glutamate + phosphate + 3 H2O + H(+). It carries out the reaction L-glutamine + H2O = L-glutamate + NH4(+). It participates in cofactor biosynthesis; pyridoxal 5'-phosphate biosynthesis. In terms of biological role, catalyzes the hydrolysis of glutamine to glutamate and ammonia as part of the biosynthesis of pyridoxal 5'-phosphate. The resulting ammonia molecule is channeled to the active site of PdxS. The sequence is that of Pyridoxal 5'-phosphate synthase subunit PdxT from Roseiflexus castenholzii (strain DSM 13941 / HLO8).